The following is a 467-amino-acid chain: 5-phosphohydroxy-L-lysine phospho-lyase (467 aa).

K278 carries the N6-(pyridoxal phosphate)lysine modification.

Belongs to the class-III pyridoxal-phosphate-dependent aminotransferase family. Homotetramer. It depends on pyridoxal 5'-phosphate as a cofactor.

It is found in the mitochondrion. The catalysed reaction is (5R)-5-phosphooxy-L-lysine + H2O = (S)-2-amino-6-oxohexanoate + NH4(+) + phosphate. Catalyzes the pyridoxal-phosphate-dependent breakdown of 5-phosphohydroxy-L-lysine, converting it to ammonia, inorganic phosphate and 2-aminoadipate semialdehyde. The sequence is that of 5-phosphohydroxy-L-lysine phospho-lyase (Phykpl) from Mus musculus (Mouse).